A 689-amino-acid polypeptide reads, in one-letter code: Outer spore wall assembly protein SHE10 (689 aa).

The first 18 residues, 1-18 (MKILTKFFLLLVVTTCSL), serve as a signal peptide directing secretion. A disordered region spans residues 259-308 (TKAKSKSKPRVNASASARGNARAGAKAGAKAGTSEISASATADPTTSASA). Residues 270–308 (NASASARGNARAGAKAGAKAGTSEISASATADPTTSASA) show a composition bias toward low complexity. Positions 406–435 (NKTKTVSEVLQNRYKNLNRAIQDINCTCET) form a coiled coil. Positions 610–626 (EQESKQREDSPRMDRDS) are enriched in basic and acidic residues. A disordered region spans residues 610-689 (EQESKQREDS…TVQNNVTLQI (80 aa)). 3 stretches are compositionally biased toward polar residues: residues 627-637 (TQNVENSNTTT), 655-670 (QNGT…GPDS), and 677-689 (METT…TLQI).

Belongs to the SHE10 family. As to quaternary structure, component of the mitochondria-localized RNase mitochondrial RNA-processing (RNase MRP) composed of one single RNA encoded by the NME1 gene and at least 31 proteins. Absent in the nucleus-localized RNase MRP (NuMRP).

The protein localises to the mitochondrion. In terms of biological role, involved in spore wall assembly. May be a component of the mitochondrial RNase MRP (MtMRP), a ribonucleoprotein endoribonuclease involved in the cleaving RNA transcripts to generate primers for DNA replication in mitochondria. In Zygosaccharomyces rouxii (strain ATCC 2623 / CBS 732 / NBRC 1130 / NCYC 568 / NRRL Y-229), this protein is Outer spore wall assembly protein SHE10.